The chain runs to 308 residues: KH domain-containing protein At4g26480 (308 aa).

The interval 1–26 (MMMMTSLGGGAGGGGGGGGSGGGRFV) is disordered. A compositionally biased stretch (gly residues) spans 7 to 24 (LGGGAGGGGGGGGSGGGR). Residues 165 to 232 (DIPVDKYPNY…EHLNEPLHIL (68 aa)) enclose the KH domain. The tract at residues 284–308 (EEGSPMSGSISPYNSLGMKRAKTRG) is disordered. Serine 294 carries the post-translational modification Phosphoserine.

The protein localises to the nucleus. In Arabidopsis thaliana (Mouse-ear cress), this protein is KH domain-containing protein At4g26480.